The sequence spans 313 residues: UPF0761 membrane protein VV0203 (313 aa).

The next 6 helical transmembrane spans lie at 41–61, 104–124, 139–159, 185–205, 215–235, and 249–269; these read YLAY…LSIL, MTAV…SNID, AVFS…LVGA, LLRW…YLLV, AVVG…GFAA, and ALAA…IVLI. The disordered stretch occupies residues 293 to 313; sequence LPNNDTELEKDTQRDRFDSES. Residues 299–313 are compositionally biased toward basic and acidic residues; sequence ELEKDTQRDRFDSES.

The protein belongs to the UPF0761 family.

It localises to the cell inner membrane. In Vibrio vulnificus (strain YJ016), this protein is UPF0761 membrane protein VV0203.